The following is a 921-amino-acid chain: MAPPVLRPENALKRADELISVGEPQAALQSLLDYITSRRIRFADPAAIEPIVFKFLELGVELKRGKVIKDGLYQYRKHVQSSTEGLKSVGAVSRRFIDLIEKKMSSEQAKANAEESTEEDLEGGVTPENLLISVYEQDQSVGGFNDEAVTSWLRFTWESYRTVLDLLRNNSQLEITYSGVVNRAMQFCLKYNRKNEFKRLADMLRQHLDAANYQQQKSKQYTVDLSDPDTLQRYLDQRILQVNVSVKLGLWHEAFRSIEDVHHLLSMSTRDPKPSVLANYYQNMAKVFFVSSNYLLNSVALQKFYDLYQQNPKATDEDFKFYASQLVLSALSIQQDDLPVVGYDPLARLAGFLNLESKPTRSQVIEAVSDSKIFSRADEPVKKLYELLNSDFDVNTLKESLASLLPELNSKSYFTQYVEPLKSFTIRKAFISASKQFGSIKLDELFEHTSLPSPFDLSPLDLEKSLLQAAMNDYVSFSIDHDAGVVSFMEDPFELLGGSTATNADDEQRNDDGYEETHVEEEPEPILTRNSAVRTQLIELAKALKETEGFPHASYVDKVRMARNELIRQNNAIIASEKEAAEERARQLEYEKQSASGVPLTAEQVVEERQRRMKEEKEAAEARMEAEARRRAEEKRERELAAINEKTMLKMIEDINAKGLIFIDPKEAKNMTLEKFKKLTVELVSKDKKDLDERMSHAFKRVDHIERAYRKLEAPLWEKDAQKQKERDLESYNKLKQMMVEKAKKDHEENLRIHDRLVKIYPSYLHFREKVIAAQKSQIEALRAENAAKLEAAKNARLQEVRQQRYNELIARRKEELAAKEHDDRQRMLQDRLTKERKERERVNKEKDEAARKQREIEEAVERTIKRNVSATPAPPVRSAPPARAAPPPRASNEQVASPAPQPEKKLTYAEKMKLRRAGRA.

The 175-residue stretch at F319–F493 folds into the PCI domain. Positions G497–E524 are disordered. Over residues D506–T517 the composition is skewed to basic and acidic residues. Coiled-coil stretches lie at residues A562 to T647 and E693 to N868. Residues A818 to I865 show a composition bias toward basic and acidic residues. Residues A818–A921 form a disordered region. A compositionally biased stretch (pro residues) spans P873–R890. The segment covering P903–M913 has biased composition (basic and acidic residues).

The protein belongs to the eIF-3 subunit A family. As to quaternary structure, component of the eukaryotic translation initiation factor 3 (eIF-3) complex.

Its subcellular location is the cytoplasm. Its function is as follows. RNA-binding component of the eukaryotic translation initiation factor 3 (eIF-3) complex, which is involved in protein synthesis of a specialized repertoire of mRNAs and, together with other initiation factors, stimulates binding of mRNA and methionyl-tRNAi to the 40S ribosome. The eIF-3 complex specifically targets and initiates translation of a subset of mRNAs involved in cell proliferation. In Eremothecium gossypii (strain ATCC 10895 / CBS 109.51 / FGSC 9923 / NRRL Y-1056) (Yeast), this protein is Eukaryotic translation initiation factor 3 subunit A.